The following is a 33-amino-acid chain: MSDIN-like toxin proprotein 6 (33 aa).

Residues 1–10 constitute a propeptide that is removed on maturation; that stretch reads MSDINATRLP. The segment at residues 11 to 20 is a cross-link (cyclopeptide (Leu-Pro)); sequence LILLAALGIP. A propeptide spanning residues 21–33 is cleaved from the precursor; it reads SDDADSTLTRGER.

Belongs to the MSDIN fungal toxin family. In terms of processing, processed by the macrocyclase-peptidase enzyme POPB to yield a toxic cyclic decapeptide. POPB first removes 10 residues from the N-terminus. Conformational trapping of the remaining peptide forces the enzyme to release this intermediate rather than proceed to macrocyclization. The enzyme rebinds the remaining peptide in a different conformation and catalyzes macrocyclization of the N-terminal 10 residues.

Probable toxin that belongs to the MSDIN-like toxin family responsible for a large number of food poisoning cases and deaths. This is MSDIN-like toxin proprotein 6 from Amanita phalloides (Death cap).